A 166-amino-acid polypeptide reads, in one-letter code: Lipoprotein signal peptidase (166 aa).

Transmembrane regions (helical) follow at residues Trp12–Gln32, Trp70–Ser90, and Ala102–Val122. Active-site residues include Asp123 and Asp141. Residues Phe137–Leu157 form a helical membrane-spanning segment.

This sequence belongs to the peptidase A8 family.

Its subcellular location is the cell inner membrane. The catalysed reaction is Release of signal peptides from bacterial membrane prolipoproteins. Hydrolyzes -Xaa-Yaa-Zaa-|-(S,diacylglyceryl)Cys-, in which Xaa is hydrophobic (preferably Leu), and Yaa (Ala or Ser) and Zaa (Gly or Ala) have small, neutral side chains.. Its pathway is protein modification; lipoprotein biosynthesis (signal peptide cleavage). In terms of biological role, this protein specifically catalyzes the removal of signal peptides from prolipoproteins. This chain is Lipoprotein signal peptidase, found in Salmonella agona (strain SL483).